Here is a 132-residue protein sequence, read N- to C-terminus: Hydrogenase maturation factor HypA (132 aa).

Histidine 2 provides a ligand contact to Ni(2+). Zn(2+) contacts are provided by cysteine 74, cysteine 77, cysteine 91, and cysteine 94.

This sequence belongs to the HypA/HybF family.

In terms of biological role, involved in the maturation of [NiFe] hydrogenases. Required for nickel insertion into the metal center of the hydrogenase. This chain is Hydrogenase maturation factor HypA, found in Synechococcus sp. (strain JA-2-3B'a(2-13)) (Cyanobacteria bacterium Yellowstone B-Prime).